Reading from the N-terminus, the 370-residue chain is Phospho-N-acetylmuramoyl-pentapeptide-transferase (370 aa).

Transmembrane regions (helical) follow at residues 31–51 (LTSM…LYGL), 73–93 (TMGG…WGNL), 98–118 (IIVL…DDYM), 135–155 (LLSI…TGVI), 177–197 (GPVL…IIGS), 209–229 (GLAT…AYVS), 251–271 (VFLS…AHPA), 273–293 (VFMG…IVIL), 298–318 (ILLL…ILQV), and 347–367 (KIVI…LSTL).

Belongs to the glycosyltransferase 4 family. MraY subfamily. The cofactor is Mg(2+).

Its subcellular location is the cell inner membrane. It catalyses the reaction UDP-N-acetyl-alpha-D-muramoyl-L-alanyl-gamma-D-glutamyl-meso-2,6-diaminopimeloyl-D-alanyl-D-alanine + di-trans,octa-cis-undecaprenyl phosphate = di-trans,octa-cis-undecaprenyl diphospho-N-acetyl-alpha-D-muramoyl-L-alanyl-D-glutamyl-meso-2,6-diaminopimeloyl-D-alanyl-D-alanine + UMP. Its pathway is cell wall biogenesis; peptidoglycan biosynthesis. Catalyzes the initial step of the lipid cycle reactions in the biosynthesis of the cell wall peptidoglycan: transfers peptidoglycan precursor phospho-MurNAc-pentapeptide from UDP-MurNAc-pentapeptide onto the lipid carrier undecaprenyl phosphate, yielding undecaprenyl-pyrophosphoryl-MurNAc-pentapeptide, known as lipid I. The sequence is that of Phospho-N-acetylmuramoyl-pentapeptide-transferase from Leptospira borgpetersenii serovar Hardjo-bovis (strain JB197).